The chain runs to 392 residues: Heavy metal-associated isoprenylated plant protein 6 (392 aa).

The segment covering 1–19 (MGEKKEETATKPQGEKKPT) has biased composition (basic and acidic residues). Positions 1 to 22 (MGEKKEETATKPQGEKKPTDGG) are disordered. The region spanning 23–86 (ITTVVMKLDM…KVADKIKRPV (64 aa)) is the HMA 1 domain. Cd(2+)-binding residues include Cys34 and Cys37. Positions 89–157 (VSTVAPPKKE…PPPPKESTVV (69 aa)) are disordered. Positions 106-145 (AEKKPSPAAEEKPAEKKPAAVEKPGEKKEEKKKEEGEKKA) are enriched in basic and acidic residues. The region spanning 153–216 (ESTVVLKTKL…YLNEKLKRTV (64 aa)) is the HMA 2 domain. Cd(2+) contacts are provided by Cys164 and Cys167. A compositionally biased stretch (basic and acidic residues) spans 258–270 (KKVDGGGEKKKEV). 2 disordered regions span residues 258 to 285 (KKVD…GGDG) and 350 to 392 (GQGY…CSVM). Gly residues predominate over residues 272 to 285 (VGGGGGGGGGGGDG). Cys389 is subject to Cysteine methyl ester. Cys389 carries the S-farnesyl cysteine lipid modification. Residues 390 to 392 (SVM) constitute a propeptide, removed in mature form.

Belongs to the HIPP family. As to expression, expressed in petioles, hypocotyls, peduncles, vascular bundles and root meristems.

It is found in the cell membrane. In terms of biological role, heavy-metal-binding protein. Involved in the maintenance of heavy metal homeostasis and/or in detoxification. In Arabidopsis thaliana (Mouse-ear cress), this protein is Heavy metal-associated isoprenylated plant protein 6.